The sequence spans 251 residues: uncharacterized protein (251 aa).

A signal peptide spans 1 to 18; sequence MRILIILSIILCSLFARA.

The protein belongs to the MlaA family.

This is an uncharacterized protein from Rickettsia felis (strain ATCC VR-1525 / URRWXCal2) (Rickettsia azadi).